A 295-amino-acid polypeptide reads, in one-letter code: Nucleotide-binding protein RD1_1380 (295 aa).

16–23 contributes to the ATP binding site; that stretch reads GPSGAGRS. 63–66 contributes to the GTP binding site; it reads DPRN.

The protein belongs to the RapZ-like family.

Displays ATPase and GTPase activities. The protein is Nucleotide-binding protein RD1_1380 of Roseobacter denitrificans (strain ATCC 33942 / OCh 114) (Erythrobacter sp. (strain OCh 114)).